The primary structure comprises 429 residues: Keratin, type I cytoskeletal 20 (429 aa).

The segment at 1 to 26 (MDFSRRSFHRSLSSSSQGPALSTSGS) is disordered. Residues 1-74 (MDFSRRSFHR…SNGGDLFGGN (74 aa)) form a head region. Over residues 10–26 (RSLSSSSQGPALSTSGS) the composition is skewed to low complexity. Phosphoserine is present on residues Ser-13, Ser-16, and Ser-26. The tract at residues 75–110 (EKLAMQNLNDRLASYLEKVRSLEQSNSKLEAQIKQW) is coil 1A. The IF rod domain occupies 75-386 (EKLAMQNLND…RLLEGEDIKT (312 aa)). The interval 111–128 (YETNAPSTIRDYSSYYAQ) is linker 1. Residues 129-220 (IKELQDQIKD…KEHQEEVEVL (92 aa)) form a coil 1B region. Positions 221–243 (RRQLGNNVNVEVDAAPGLNLGEI) are linker 12. Residues 244–382 (MNEMRQKYEI…ATYRRLLEGE (139 aa)) form a coil 2 region. Positions 383 to 429 (DIKTTEYQLNTLEAKDIKKTRKIKTVVEEVVDGKVVSSEVKEIEENI) are tail.

Belongs to the intermediate filament family. In terms of assembly, heterotetramer of two type I and two type II keratins. Associates with KRT8. Hyperphosphorylation at Ser-13 occurs during the early stages of apoptosis but becomes less prominent during the later stages. Phosphorylation at Ser-13 also increases in response to stress brought on by cell injury. In terms of processing, proteolytically cleaved by caspases during apoptosis. Cleavage occurs at Asp-233. In terms of tissue distribution, expressed predominantly in the intestinal epithelium in differentiated villus cells.

Plays a significant role in maintaining keratin filament organization in intestinal epithelia. When phosphorylated, plays a role in the secretion of mucin in the small intestine. In Rattus norvegicus (Rat), this protein is Keratin, type I cytoskeletal 20 (Krt20).